A 443-amino-acid chain; its full sequence is Ribosomal protein uS12 methylthiotransferase RimO (443 aa).

The region spanning 9–119 is the MTTase N-terminal domain; the sequence is PKIGMVSLGC…VVSAVHDAAP (111 aa). Positions 18, 54, 83, 150, 154, and 157 each coordinate [4Fe-4S] cluster. One can recognise a Radical SAM core domain in the interval 136–373; sequence LTPRHYSYLK…MEKAAQISEA (238 aa). The region spanning 376-443 is the TRAM domain; that stretch reads QAKIGRDIAT…EHDLFGVALS (68 aa).

The protein belongs to the methylthiotransferase family. RimO subfamily. [4Fe-4S] cluster serves as cofactor.

Its subcellular location is the cytoplasm. The catalysed reaction is L-aspartate(89)-[ribosomal protein uS12]-hydrogen + (sulfur carrier)-SH + AH2 + 2 S-adenosyl-L-methionine = 3-methylsulfanyl-L-aspartate(89)-[ribosomal protein uS12]-hydrogen + (sulfur carrier)-H + 5'-deoxyadenosine + L-methionine + A + S-adenosyl-L-homocysteine + 2 H(+). Its function is as follows. Catalyzes the methylthiolation of an aspartic acid residue of ribosomal protein uS12. This is Ribosomal protein uS12 methylthiotransferase RimO from Zymomonas mobilis subsp. mobilis (strain ATCC 31821 / ZM4 / CP4).